A 144-amino-acid chain; its full sequence is Large ribosomal subunit protein uL13 (144 aa).

The protein belongs to the universal ribosomal protein uL13 family. Part of the 50S ribosomal subunit.

Its function is as follows. This protein is one of the early assembly proteins of the 50S ribosomal subunit, although it is not seen to bind rRNA by itself. It is important during the early stages of 50S assembly. The protein is Large ribosomal subunit protein uL13 of Buchnera aphidicola subsp. Baizongia pistaciae (strain Bp).